A 79-amino-acid chain; its full sequence is uncharacterized protein (79 aa).

The signal sequence occupies residues 1–20 (MSQLMGIITRLQSLQETAEA).

This is an uncharacterized protein from Bacillus subtilis (strain 168).